Consider the following 542-residue polypeptide: Glucose-6-phosphate isomerase 2 (542 aa).

Glu353 acts as the Proton donor in catalysis. Active-site residues include His384 and Lys505.

This sequence belongs to the GPI family.

The protein resides in the cytoplasm. The enzyme catalyses alpha-D-glucose 6-phosphate = beta-D-fructose 6-phosphate. It functions in the pathway carbohydrate biosynthesis; gluconeogenesis. The protein operates within carbohydrate degradation; glycolysis; D-glyceraldehyde 3-phosphate and glycerone phosphate from D-glucose: step 2/4. Catalyzes the reversible isomerization of glucose-6-phosphate to fructose-6-phosphate. The polypeptide is Glucose-6-phosphate isomerase 2 (Cupriavidus pinatubonensis (strain JMP 134 / LMG 1197) (Cupriavidus necator (strain JMP 134))).